The following is a 233-amino-acid chain: C-type lectin domain family 2 member D5 (233 aa).

Residues 1-52 (MPSSAHLQDPPPLLSRTLTQNEGQTSLRQSSSCGPSAASASESLSGSTESRI) are disordered. The Cytoplasmic segment spans residues 1 to 76 (MPSSAHLQDP…PLEYPAGLYC (76 aa)). The span at 16 to 29 (RTLTQNEGQTSLRQ) shows a compositional bias: polar residues. The span at 30–50 (SSSCGPSAASASESLSGSTES) shows a compositional bias: low complexity. The helical; Signal-anchor for type II membrane protein transmembrane segment at 77–97 (CYVVIIVLSVAVVALSVALSV) threads the bilayer. The Extracellular portion of the chain corresponds to 98–233 (KKTAQISTIN…KPNSYTSQCL (136 aa)). Residues 119 to 228 (VGNKCFYFNE…KSICRKPNSY (110 aa)) enclose the C-type lectin domain. N-linked (GlcNAc...) asparagine glycosylation occurs at asparagine 132.

It localises to the cell membrane. Lectin-type cell surface receptor. The sequence is that of C-type lectin domain family 2 member D5 (Ocil) from Rattus norvegicus (Rat).